A 699-amino-acid chain; its full sequence is Elongation factor G (699 aa).

The region spanning 8 to 290 (ERYRNIGIMA…AVLDYLPSPV (283 aa)) is the tr-type G domain. Residues 17–24 (AHIDAGKT), 88–92 (DTPGH), and 142–145 (NKMD) contribute to the GTP site.

This sequence belongs to the TRAFAC class translation factor GTPase superfamily. Classic translation factor GTPase family. EF-G/EF-2 subfamily.

Its subcellular location is the cytoplasm. In terms of biological role, catalyzes the GTP-dependent ribosomal translocation step during translation elongation. During this step, the ribosome changes from the pre-translocational (PRE) to the post-translocational (POST) state as the newly formed A-site-bound peptidyl-tRNA and P-site-bound deacylated tRNA move to the P and E sites, respectively. Catalyzes the coordinated movement of the two tRNA molecules, the mRNA and conformational changes in the ribosome. The protein is Elongation factor G of Acidithiobacillus ferrooxidans (strain ATCC 23270 / DSM 14882 / CIP 104768 / NCIMB 8455) (Ferrobacillus ferrooxidans (strain ATCC 23270)).